Consider the following 229-residue polypeptide: tRNA pseudouridine synthase B (229 aa).

The active-site Nucleophile is the Asp52.

The protein belongs to the pseudouridine synthase TruB family. Type 1 subfamily.

The catalysed reaction is uridine(55) in tRNA = pseudouridine(55) in tRNA. Functionally, responsible for synthesis of pseudouridine from uracil-55 in the psi GC loop of transfer RNAs. This is tRNA pseudouridine synthase B from Flavobacterium johnsoniae (strain ATCC 17061 / DSM 2064 / JCM 8514 / BCRC 14874 / CCUG 350202 / NBRC 14942 / NCIMB 11054 / UW101) (Cytophaga johnsonae).